A 676-amino-acid chain; its full sequence is DNA ligase (676 aa).

NAD(+) is bound by residues 39–43 (DYVYD), 88–91 (SLND), and Glu-118. Residue Lys-120 is the N6-AMP-lysine intermediate of the active site. Positions 141, 175, 291, and 315 each coordinate NAD(+). Zn(2+)-binding residues include Cys-409, Cys-412, Cys-427, and Cys-432. Positions 595–676 (EVESPFKDKT…MVDALDASHF (82 aa)) constitute a BRCT domain.

The protein belongs to the NAD-dependent DNA ligase family. LigA subfamily. Mg(2+) is required as a cofactor. Requires Mn(2+) as cofactor.

It catalyses the reaction NAD(+) + (deoxyribonucleotide)n-3'-hydroxyl + 5'-phospho-(deoxyribonucleotide)m = (deoxyribonucleotide)n+m + AMP + beta-nicotinamide D-nucleotide.. In terms of biological role, DNA ligase that catalyzes the formation of phosphodiester linkages between 5'-phosphoryl and 3'-hydroxyl groups in double-stranded DNA using NAD as a coenzyme and as the energy source for the reaction. It is essential for DNA replication and repair of damaged DNA. The sequence is that of DNA ligase from Enterococcus faecalis (strain ATCC 700802 / V583).